Reading from the N-terminus, the 96-residue chain is Co-chaperonin GroES (96 aa).

The protein belongs to the GroES chaperonin family. Heptamer of 7 subunits arranged in a ring. Interacts with the chaperonin GroEL.

Its subcellular location is the cytoplasm. In terms of biological role, together with the chaperonin GroEL, plays an essential role in assisting protein folding. The GroEL-GroES system forms a nano-cage that allows encapsulation of the non-native substrate proteins and provides a physical environment optimized to promote and accelerate protein folding. GroES binds to the apical surface of the GroEL ring, thereby capping the opening of the GroEL channel. The polypeptide is Co-chaperonin GroES (Syntrophomonas wolfei subsp. wolfei (strain DSM 2245B / Goettingen)).